We begin with the raw amino-acid sequence, 930 residues long: uncharacterized protein (930 aa).

A signal peptide spans 1–20 (MPSFVLWTFHLCSQWFQGLT). 8 N-linked (GlcNAc...) asparagine glycosylation sites follow: asparagine 137, asparagine 146, asparagine 164, asparagine 210, asparagine 257, asparagine 628, asparagine 717, and asparagine 799.

It is found in the secreted. This is an uncharacterized protein from Arthroderma benhamiae (strain ATCC MYA-4681 / CBS 112371) (Trichophyton mentagrophytes).